Here is a 453-residue protein sequence, read N- to C-terminus: Nuclear and cytoplasmic polyadenylated RNA-binding protein PUB1 (453 aa).

Residues methionine 1–threonine 67 form a disordered region. Serine 2 carries the post-translational modification N-acetylserine. 2 RRM domains span residues arginine 75–glutamine 152 and phenylalanine 162–lysine 240. The tract at residues arginine 241–glycine 262 is disordered. The span at asparagine 244 to glycine 262 shows a compositional bias: low complexity. Arginine 260 bears the Omega-N-methylarginine mark. An RNA-binding RGG-box region spans residues arginine 260 to arginine 264. The RRM 3 domain occupies threonine 341–glutamate 413. Residues proline 419 to glutamine 453 are disordered. Over residues glutamine 434 to glutamine 453 the composition is skewed to low complexity.

As to quaternary structure, interacts with NAB2.

It localises to the cytoplasm. The protein localises to the nucleus. It is found in the P-body. The protein resides in the stress granule. In terms of biological role, may be associated with hnRNA within the nucleus and remains associated during nucleocytoplasmic mRNA transport, once the proteins are in the cytoplasm, disassembly of PUB1-RNA complexes may occur prior to PAB1 binding and formation of a translationally competent RNP complex. Binds to polyadenylated RNA; prefers to bind poly(rU); binds to T-rich single-stranded DNA. In Saccharomyces cerevisiae (strain ATCC 204508 / S288c) (Baker's yeast), this protein is Nuclear and cytoplasmic polyadenylated RNA-binding protein PUB1.